Consider the following 125-residue polypeptide: Glycine cleavage system H protein 1 (125 aa).

The 82-residue stretch at 22-103 (KAYIGITDYA…PYGSWLVAVR (82 aa)) folds into the Lipoyl-binding domain. Residue Lys-63 is modified to N6-lipoyllysine.

This sequence belongs to the GcvH family. The glycine cleavage system is composed of four proteins: P, T, L and H. Requires (R)-lipoate as cofactor.

Functionally, the glycine cleavage system catalyzes the degradation of glycine. The H protein shuttles the methylamine group of glycine from the P protein to the T protein. This is Glycine cleavage system H protein 1 from Caldanaerobacter subterraneus subsp. tengcongensis (strain DSM 15242 / JCM 11007 / NBRC 100824 / MB4) (Thermoanaerobacter tengcongensis).